The sequence spans 785 residues: Probable cationic amino acid transporter (785 aa).

Transmembrane regions (helical) follow at residues 58–78, 83–103, 119–141, 187–207, 216–236, 251–271, 291–311, 337–357, 360–380, 384–404, 407–427, 568–588, 596–616, 628–648, and 655–675; these read LVSL…SGLV, AGPG…LSGV, AYTY…NLIL, YPDI…ALGV, VLNV…LFFV, WSGV…FDII, ASLV…TLMV, IVAI…LFPM, VIYA…VSTY, PAVA…LVSL, LIEM…VCVL, CVVL…FGSG, WAVL…FIII, MAPC…YLML, and WIRF…YGMW. The tract at residues 715 to 785 is disordered; that stretch reads DQGPFQNWGK…VDDDLDDPLE (71 aa). Residues 727 to 740 show a composition bias toward low complexity; sequence QQKQPQQEQSEPQS. Positions 775–785 are enriched in acidic residues; that stretch reads VVDDDLDDPLE.

The protein belongs to the amino acid-polyamine-organocation (APC) superfamily.

Its subcellular location is the lysosome membrane. Its function is as follows. May be involved in arginine transport. The polypeptide is Probable cationic amino acid transporter (slc7a14a) (Danio rerio (Zebrafish)).